We begin with the raw amino-acid sequence, 590 residues long: Arginine--tRNA ligase (590 aa).

The 'HIGH' region motif lies at 126–136; the sequence is PNVAKEMHVGH.

This sequence belongs to the class-I aminoacyl-tRNA synthetase family. In terms of assembly, monomer.

It is found in the cytoplasm. It catalyses the reaction tRNA(Arg) + L-arginine + ATP = L-arginyl-tRNA(Arg) + AMP + diphosphate. The chain is Arginine--tRNA ligase from Streptomyces avermitilis (strain ATCC 31267 / DSM 46492 / JCM 5070 / NBRC 14893 / NCIMB 12804 / NRRL 8165 / MA-4680).